The sequence spans 117 residues: MSGEVSHRAGFVAEEAVARIYERADRPVTARRWRGAAGEIDLIARDGAEVIFIEVKKSKSHAAAAARLSRRQMERIYGAASEFLAGEPLGQLTASRFDVALVDGMGRIEIIENAFAA.

Belongs to the UPF0102 family.

In Cereibacter sphaeroides (strain ATCC 17025 / ATH 2.4.3) (Rhodobacter sphaeroides), this protein is UPF0102 protein Rsph17025_0472.